Here is a 155-residue protein sequence, read N- to C-terminus: Cytochrome c-type biogenesis protein CcmE (155 aa).

The Cytoplasmic portion of the chain corresponds to 1 to 8; the sequence is MNPIRKKR. A helical; Signal-anchor for type II membrane protein transmembrane segment spans residues 9-29; the sequence is LYWILALLCGVSIAMALALSA. Topologically, residues 30-155 are periplasmic; that stretch reads LQENINLFYT…PKRVKQESTR (126 aa). 2 residues coordinate heme: His-124 and Tyr-128.

It belongs to the CcmE/CycJ family.

It is found in the cell inner membrane. Its function is as follows. Heme chaperone required for the biogenesis of c-type cytochromes. Transiently binds heme delivered by CcmC and transfers the heme to apo-cytochromes in a process facilitated by CcmF and CcmH. The sequence is that of Cytochrome c-type biogenesis protein CcmE from Janthinobacterium sp. (strain Marseille) (Minibacterium massiliensis).